The sequence spans 262 residues: MIDKSAFIHPTAIVEDGAVIGANAHIGPFCIVGPQVEIGEGTVLKSHVVVNGQTKIGRDNEIYQFASIGEVNQDLKYAGEPTRVEIGDRNRIRESVTIHRGTVQGGGLTKVGSDNLLMINAHVAHDCTVGNRCILANNATLAGHVSVDDFAIIGGMTAVHQFCIIGAHVMVGGCSGVAQDVPPYVVAQGNHATPFGVNIEGLKRRGFSREGLVAIRNAYKLLYRSGKTLDEAKLEIAELAEKHPEVKAFTEFFERSTRGPIR.

It belongs to the transferase hexapeptide repeat family. LpxA subfamily. In terms of assembly, homotrimer.

Its subcellular location is the cytoplasm. It carries out the reaction a (3R)-hydroxyacyl-[ACP] + UDP-N-acetyl-alpha-D-glucosamine = a UDP-3-O-[(3R)-3-hydroxyacyl]-N-acetyl-alpha-D-glucosamine + holo-[ACP]. The protein operates within glycolipid biosynthesis; lipid IV(A) biosynthesis; lipid IV(A) from (3R)-3-hydroxytetradecanoyl-[acyl-carrier-protein] and UDP-N-acetyl-alpha-D-glucosamine: step 1/6. Functionally, involved in the biosynthesis of lipid A, a phosphorylated glycolipid that anchors the lipopolysaccharide to the outer membrane of the cell. This chain is Acyl-[acyl-carrier-protein]--UDP-N-acetylglucosamine O-acyltransferase, found in Salmonella heidelberg (strain SL476).